Reading from the N-terminus, the 382-residue chain is Dihydroflavonol 4-reductase (382 aa).

NADP(+) is bound by residues K44 and Y163.

The protein belongs to the NAD(P)-dependent epimerase/dehydratase family. Dihydroflavonol-4-reductase subfamily.

The enzyme catalyses a (2R,3S,4S)-leucoanthocyanidin + NADP(+) = a (2R,3R)-dihydroflavonol + NADPH + H(+). It catalyses the reaction (2S)-flavan-4-ol + NADP(+) = (2S)-flavanone + NADPH + H(+). Its pathway is pigment biosynthesis; anthocyanin biosynthesis. Functionally, bifunctional enzyme involved in flavonoid metabolism. The chain is Dihydroflavonol 4-reductase (DFRA) from Arabidopsis thaliana (Mouse-ear cress).